The primary structure comprises 374 residues: Glutamate 5-kinase (374 aa).

ATP is bound at residue lysine 17. Residues serine 57, aspartate 144, and asparagine 156 each coordinate substrate. ATP is bound by residues 176 to 177 (SD) and 218 to 224 (TGGMVTK). In terms of domain architecture, PUA spans 280–358 (QGALVLDDGA…RELARELGPA (79 aa)).

The protein belongs to the glutamate 5-kinase family.

Its subcellular location is the cytoplasm. It catalyses the reaction L-glutamate + ATP = L-glutamyl 5-phosphate + ADP. The protein operates within amino-acid biosynthesis; L-proline biosynthesis; L-glutamate 5-semialdehyde from L-glutamate: step 1/2. In terms of biological role, catalyzes the transfer of a phosphate group to glutamate to form L-glutamate 5-phosphate. In Streptomyces coelicolor (strain ATCC BAA-471 / A3(2) / M145), this protein is Glutamate 5-kinase.